We begin with the raw amino-acid sequence, 393 residues long: Elongation factor Tu (393 aa).

The tr-type G domain maps to 10 to 203; the sequence is KPHVNIGTIG…AVDSFIPDPV (194 aa). The segment at 19–26 is G1; it reads GHVDHGKT. A GTP-binding site is contributed by 19–26; it reads GHVDHGKT. Thr-26 serves as a coordination point for Mg(2+). Positions 60–64 are G2; that stretch reads GITIS. The segment at 81 to 84 is G3; that stretch reads DCPG. GTP is bound by residues 81 to 85 and 136 to 139; these read DCPGH and NKVD. The G4 stretch occupies residues 136-139; the sequence is NKVD. A G5 region spans residues 173–175; the sequence is SAL.

It belongs to the TRAFAC class translation factor GTPase superfamily. Classic translation factor GTPase family. EF-Tu/EF-1A subfamily. As to quaternary structure, monomer.

The protein resides in the cytoplasm. The catalysed reaction is GTP + H2O = GDP + phosphate + H(+). Functionally, GTP hydrolase that promotes the GTP-dependent binding of aminoacyl-tRNA to the A-site of ribosomes during protein biosynthesis. The polypeptide is Elongation factor Tu (Pelodictyon phaeoclathratiforme (strain DSM 5477 / BU-1)).